Here is a 152-residue protein sequence, read N- to C-terminus: Endoribonuclease YbeY (152 aa).

H118, H122, and H128 together coordinate Zn(2+).

It belongs to the endoribonuclease YbeY family. It depends on Zn(2+) as a cofactor.

It is found in the cytoplasm. Its function is as follows. Single strand-specific metallo-endoribonuclease involved in late-stage 70S ribosome quality control and in maturation of the 3' terminus of the 16S rRNA. This Lacticaseibacillus paracasei (strain ATCC 334 / BCRC 17002 / CCUG 31169 / CIP 107868 / KCTC 3260 / NRRL B-441) (Lactobacillus paracasei) protein is Endoribonuclease YbeY.